The following is a 123-amino-acid chain: Large ribosomal subunit protein uL14 (123 aa).

The protein belongs to the universal ribosomal protein uL14 family. As to quaternary structure, part of the 50S ribosomal subunit. Forms a cluster with proteins L3 and L19. In the 70S ribosome, L14 and L19 interact and together make contacts with the 16S rRNA in bridges B5 and B8.

Its function is as follows. Binds to 23S rRNA. Forms part of two intersubunit bridges in the 70S ribosome. The protein is Large ribosomal subunit protein uL14 of Actinobacillus pleuropneumoniae serotype 7 (strain AP76).